Consider the following 159-residue polypeptide: ATP synthase subunit b 2 (159 aa).

The helical transmembrane segment at 1–21 threads the bilayer; the sequence is MDATFWAFIALVIFVVIVVYM.

This sequence belongs to the ATPase B chain family. In terms of assembly, F-type ATPases have 2 components, F(1) - the catalytic core - and F(0) - the membrane proton channel. F(1) has five subunits: alpha(3), beta(3), gamma(1), delta(1), epsilon(1). F(0) has three main subunits: a(1), b(2) and c(10-14). The alpha and beta chains form an alternating ring which encloses part of the gamma chain. F(1) is attached to F(0) by a central stalk formed by the gamma and epsilon chains, while a peripheral stalk is formed by the delta and b chains.

It localises to the cell inner membrane. In terms of biological role, f(1)F(0) ATP synthase produces ATP from ADP in the presence of a proton or sodium gradient. F-type ATPases consist of two structural domains, F(1) containing the extramembraneous catalytic core and F(0) containing the membrane proton channel, linked together by a central stalk and a peripheral stalk. During catalysis, ATP synthesis in the catalytic domain of F(1) is coupled via a rotary mechanism of the central stalk subunits to proton translocation. Component of the F(0) channel, it forms part of the peripheral stalk, linking F(1) to F(0). This chain is ATP synthase subunit b 2, found in Brucella canis (strain ATCC 23365 / NCTC 10854 / RM-666).